The sequence spans 113 residues: U11-theraphotoxin-Hhn1l (113 aa).

The first 21 residues, 1–21, serve as a signal peptide directing secretion; the sequence is MNTGRVTFLVVFLVAVSLGPA. The propeptide occupies 22–74; sequence DKEENPMEMQEKTQQGKNYLNFGENLVVPKLEELKAKLVEKESKKSKNSRQKR. 2 disulfides stabilise this stretch: cysteine 82–cysteine 95 and cysteine 89–cysteine 110.

It belongs to the neurotoxin 14 (magi-1) family. 01 (HNTX-16) subfamily. As to expression, expressed by the venom gland.

The protein localises to the secreted. Functionally, probable ion channel inhibitor. This chain is U11-theraphotoxin-Hhn1l, found in Cyriopagopus hainanus (Chinese bird spider).